The following is a 456-amino-acid chain: Acetylcholine receptor subunit alpha (456 aa).

An N-terminal signal peptide occupies residues 1–20 (MNYFILILPILPYLYGPAVC). Residues 21 to 230 (SEDETRLVKT…ITYHFLLLRL (210 aa)) are Extracellular-facing. Cystine bridges form between C148/C162 and C212/C213. A glycan (N-linked (GlcNAc...) asparagine) is linked at N161. The next 3 membrane-spanning stretches (helical) occupy residues 231–255 (PLYF…VFYL), 263–281 (MTLS…LVIV), and 297–316 (YMLF…VIVI). At 317 to 428 (NTHHRSPSTH…WKFVAMVLDH (112 aa)) the chain is on the cytoplasmic side. Residues 429 to 447 (ILLCVFMAVCIIGTLGVFA) form a helical membrane-spanning segment.

Belongs to the ligand-gated ion channel (TC 1.A.9) family. Acetylcholine receptor (TC 1.A.9.1) subfamily. Alpha-1/CHRNA1 sub-subfamily. One of the alpha chains that assemble within the acetylcholine receptor, a pentamer of two alpha chains, a beta, a delta, and a gamma or epsilon chains.

The protein localises to the postsynaptic cell membrane. It is found in the cell membrane. The enzyme catalyses K(+)(in) = K(+)(out). It catalyses the reaction Na(+)(in) = Na(+)(out). In terms of biological role, upon acetylcholine binding, the AChR responds by an extensive change in conformation that affects all subunits and leads to opening of an ion-conducting channel across the plasma membrane. This is Acetylcholine receptor subunit alpha (chrna1) from Danio rerio (Zebrafish).